A 163-amino-acid chain; its full sequence is Phosphopantetheine adenylyltransferase (163 aa).

Position 10 (Ser10) interacts with substrate. ATP-binding positions include 10-11 (SF) and His18. Residues Lys42, Leu74, and Arg88 each contribute to the substrate site. ATP contacts are provided by residues 89 to 91 (GLR), Glu99, and 124 to 130 (YSFLSSS).

The protein belongs to the bacterial CoaD family. Homohexamer. It depends on Mg(2+) as a cofactor.

It localises to the cytoplasm. The catalysed reaction is (R)-4'-phosphopantetheine + ATP + H(+) = 3'-dephospho-CoA + diphosphate. It participates in cofactor biosynthesis; coenzyme A biosynthesis; CoA from (R)-pantothenate: step 4/5. Functionally, reversibly transfers an adenylyl group from ATP to 4'-phosphopantetheine, yielding dephospho-CoA (dPCoA) and pyrophosphate. This chain is Phosphopantetheine adenylyltransferase, found in Bacillus mycoides (strain KBAB4) (Bacillus weihenstephanensis).